Reading from the N-terminus, the 1047-residue chain is Atrial natriuretic peptide receptor 2 (1047 aa).

Positions Met-1–Gly-16 are cleaved as a signal peptide. Over Val-17–Ile-458 the chain is Extracellular. Asn-24 and Asn-35 each carry an N-linked (GlcNAc...) asparagine glycan. Cys-75 and Cys-101 form a disulfide bridge. Residues Asn-161, Asn-195, Asn-244, Asn-277, and Asn-349 are each glycosylated (N-linked (GlcNAc...) asparagine). A helical membrane pass occupies residues Val-459–Phe-478. Residues Arg-479–Leu-1047 are Cytoplasmic-facing. The residue at position 513 (Ser-513) is a Phosphoserine. In terms of domain architecture, Protein kinase spans Ser-513–Ile-786. Thr-516 bears the Phosphothreonine mark. A phosphoserine mark is found at Ser-518, Ser-522, Ser-523, and Ser-526. Thr-529 carries the phosphothreonine modification. The region spanning Thr-861–Glu-991 is the Guanylate cyclase domain.

This sequence belongs to the adenylyl cyclase class-4/guanylyl cyclase family. Post-translationally, phosphorylated. Phosphorylation of the protein kinase-like domain is required for full activation by CNP. In terms of processing, glycosylated.

It localises to the cell membrane. It carries out the reaction GTP = 3',5'-cyclic GMP + diphosphate. In terms of biological role, receptor for the C-type natriuretic peptide NPPC/CNP hormone. Has guanylate cyclase activity upon binding of its ligand. May play a role in the regulation of skeletal growth. The sequence is that of Atrial natriuretic peptide receptor 2 (Npr2) from Rattus norvegicus (Rat).